The following is a 655-amino-acid chain: Protein npp-24 (655 aa).

Residues Ile-263 to Pro-283 form a helical membrane-spanning segment.

It is found in the membrane. This is Protein npp-24 from Caenorhabditis elegans.